Here is a 491-residue protein sequence, read N- to C-terminus: UDP-N-acetylmuramate--L-alanine ligase (491 aa).

126-132 (GTHGKTT) contacts ATP.

The protein belongs to the MurCDEF family.

The protein resides in the cytoplasm. It catalyses the reaction UDP-N-acetyl-alpha-D-muramate + L-alanine + ATP = UDP-N-acetyl-alpha-D-muramoyl-L-alanine + ADP + phosphate + H(+). Its pathway is cell wall biogenesis; peptidoglycan biosynthesis. Its function is as follows. Cell wall formation. The polypeptide is UDP-N-acetylmuramate--L-alanine ligase (Yersinia pestis (strain Pestoides F)).